The primary structure comprises 122 residues: Large ribosomal subunit protein uL14 (122 aa).

It belongs to the universal ribosomal protein uL14 family. Part of the 50S ribosomal subunit. Forms a cluster with proteins L3 and L19. In the 70S ribosome, L14 and L19 interact and together make contacts with the 16S rRNA in bridges B5 and B8.

In terms of biological role, binds to 23S rRNA. Forms part of two intersubunit bridges in the 70S ribosome. The chain is Large ribosomal subunit protein uL14 from Dehalococcoides mccartyi (strain ATCC BAA-2266 / KCTC 15142 / 195) (Dehalococcoides ethenogenes (strain 195)).